The chain runs to 252 residues: Protein Flattop homolog (252 aa).

The interval 177–252 (TEKRRRKRTI…EKERKAAKGH (76 aa)) is disordered. The segment covering 218 to 252 (PKDKPKDKPKDKEAGKKDKTKDKGKEKERKAAKGH) has biased composition (basic and acidic residues).

This sequence belongs to the Flattop family.

The polypeptide is Protein Flattop homolog (Drosophila melanogaster (Fruit fly)).